A 902-amino-acid chain; its full sequence is Gamma-tubulin complex component 2 (902 aa).

Phosphotyrosine is present on Y83. The segment at E875–Q902 is disordered.

It belongs to the TUBGCP family. Component of the gamma-tubulin ring complex (gTuRC) consisting of TUBGCP2, TUBGCP3, TUBGCP4, TUBGCP5 and TUBGCP6 and gamma-tubulin TUBG1 or TUBG2. TUBGCP2, TUBGCP3, TUBGCP4, TUBGCP5 and TUBGCP6 assemble in a 5:5:2:1:1 stoichiometry; each is associated with a gamma-tubulin, thereby arranging 14 gamma-tubulins in a helical manner. Gamma-tubulin at the first position is blocked by TUBGCP3 at the last position, allowing 13 protafilaments to grow into a microtubule. The gTuRC (via TUBGCP3 and TUBGCP6) interacts with ACTB and MZT1; the interactions form a luminal bridge that stabilizes the initial structure during complex assembly. The gTuRC (via TUBGCP2) interacts with MZT2A/MZT2B and CDK5RAP2 (via CM1 motif); the interactions play a role in gTuRC activation. Interacts with ATF5; the ATF5:PCNT:polyglutamylated tubulin (PGT) tripartite unites the mother centriole and the pericentriolar material (PCM) in the centrosome.

It localises to the cytoplasm. It is found in the cytoskeleton. Its subcellular location is the microtubule organizing center. The protein resides in the centrosome. In terms of biological role, component of the gamma-tubulin ring complex (gTuRC) which mediates microtubule nucleation. The gTuRC regulates the minus-end nucleation of alpha-beta tubulin heterodimers that grow into microtubule protafilaments, a critical step in centrosome duplication and spindle formation. Plays a role in neuronal migration. The sequence is that of Gamma-tubulin complex component 2 (TUBGCP2) from Pongo abelii (Sumatran orangutan).